A 305-amino-acid chain; its full sequence is MYNGILPVYKERGLTSHDVVFKLRKILKTKKIGHTGTLDPEVSGVLPVCIGTATRVSDYVMDMGKSYNATITLGESTTTEDQTGEVIDKIDVQANAININEVDAVLKQFEGIIEQVPPMYSSVKVNGKKLYEYARKGETVERPIRKVNIDSIARTSELQFEDGKCHFNIEVKCGKGTYIRTLATDIGKQLGYPAHMSLLTRINSGGFDIKDSITLDQISQLHEQDTLQPHLFPLEYGLKSLPKIYVSDENIKTRILNGQKFNKKQFNQTIEQQLVFIDSETEKVMAIYIQHPEKNHEIKPKKVFN.

Asp39 serves as the catalytic Nucleophile.

This sequence belongs to the pseudouridine synthase TruB family. Type 1 subfamily.

It catalyses the reaction uridine(55) in tRNA = pseudouridine(55) in tRNA. Its function is as follows. Responsible for synthesis of pseudouridine from uracil-55 in the psi GC loop of transfer RNAs. The polypeptide is tRNA pseudouridine synthase B (Staphylococcus haemolyticus (strain JCSC1435)).